The chain runs to 34 residues: Photosystem I reaction center subunit XII (34 aa).

A helical transmembrane segment spans residues 10 to 32 (IFIALVVAAHAGVLAVRLCVSLY).

It belongs to the PsaM family.

Its subcellular location is the cellular thylakoid membrane. The sequence is that of Photosystem I reaction center subunit XII from Synechococcus sp. (strain WH7803).